Consider the following 338-residue polypeptide: Ornithine carbamoyltransferase (338 aa).

Residues arginine 116 and 143 to 146 (HPCQ) each bind carbamoyl phosphate. Residues asparagine 174, aspartate 235, and 239-240 (SM) contribute to the L-ornithine site. 2 residues coordinate carbamoyl phosphate: cysteine 275 and arginine 303.

It belongs to the aspartate/ornithine carbamoyltransferase superfamily. OTCase family.

The protein localises to the cytoplasm. It carries out the reaction carbamoyl phosphate + L-ornithine = L-citrulline + phosphate + H(+). It functions in the pathway amino-acid biosynthesis; L-arginine biosynthesis; L-arginine from L-ornithine and carbamoyl phosphate: step 1/3. In terms of biological role, reversibly catalyzes the transfer of the carbamoyl group from carbamoyl phosphate (CP) to the N(epsilon) atom of ornithine (ORN) to produce L-citrulline. This is Ornithine carbamoyltransferase from Chlorobaculum tepidum (strain ATCC 49652 / DSM 12025 / NBRC 103806 / TLS) (Chlorobium tepidum).